A 172-amino-acid polypeptide reads, in one-letter code: uncharacterized protein (172 aa).

A PfpI endopeptidase domain is found at 3–171 (KKVAIILADE…FNREIVKKLE (169 aa)).

It belongs to the peptidase C56 family.

This is an uncharacterized protein from Staphylococcus epidermidis (strain ATCC 35984 / DSM 28319 / BCRC 17069 / CCUG 31568 / BM 3577 / RP62A).